A 289-amino-acid polypeptide reads, in one-letter code: Diaminopimelate epimerase (289 aa).

3 residues coordinate substrate: Asn-17, Gln-47, and Asn-67. Cys-76 acts as the Proton donor in catalysis. Substrate-binding positions include 77–78 (GN), Asn-164, Asn-198, and 216–217 (ER). The Proton acceptor role is filled by Cys-225. A substrate-binding site is contributed by 226 to 227 (GS).

Belongs to the diaminopimelate epimerase family. As to quaternary structure, homodimer.

Its subcellular location is the cytoplasm. It carries out the reaction (2S,6S)-2,6-diaminopimelate = meso-2,6-diaminopimelate. It participates in amino-acid biosynthesis; L-lysine biosynthesis via DAP pathway; DL-2,6-diaminopimelate from LL-2,6-diaminopimelate: step 1/1. Its function is as follows. Catalyzes the stereoinversion of LL-2,6-diaminopimelate (L,L-DAP) to meso-diaminopimelate (meso-DAP), a precursor of L-lysine and an essential component of the bacterial peptidoglycan. This chain is Diaminopimelate epimerase, found in Bradyrhizobium sp. (strain ORS 278).